Consider the following 134-residue polypeptide: Small ribosomal subunit protein uS8c (134 aa).

The protein belongs to the universal ribosomal protein uS8 family. Part of the 30S ribosomal subunit.

The protein resides in the plastid. The protein localises to the chloroplast. Its function is as follows. One of the primary rRNA binding proteins, it binds directly to 16S rRNA central domain where it helps coordinate assembly of the platform of the 30S subunit. The polypeptide is Small ribosomal subunit protein uS8c (rps8) (Lotus japonicus (Lotus corniculatus var. japonicus)).